Reading from the N-terminus, the 304-residue chain is Protease HtpX homolog (304 aa).

2 consecutive transmembrane segments (helical) span residues 19–39 (FIVFIIYFLLFFVCYAVVSYF) and 41–61 (LGEIGIIIAFLIVLFTNYYAY). H146 provides a ligand contact to Zn(2+). The active site involves E147. Residue H150 participates in Zn(2+) binding. Helical transmembrane passes span 156–176 (VRLQTIAAVMVGLIVILGDGL) and 192–212 (NILGIVSLIIAILAPFLATLL). E221 serves as a coordination point for Zn(2+).

Belongs to the peptidase M48B family. Requires Zn(2+) as cofactor.

Its subcellular location is the cell inner membrane. The protein is Protease HtpX homolog of Dictyoglomus turgidum (strain DSM 6724 / Z-1310).